Here is a 128-residue protein sequence, read N- to C-terminus: UPF0102 protein GSU0650 (128 aa).

This sequence belongs to the UPF0102 family.

The polypeptide is UPF0102 protein GSU0650 (Geobacter sulfurreducens (strain ATCC 51573 / DSM 12127 / PCA)).